A 502-amino-acid polypeptide reads, in one-letter code: Inosine-5'-monophosphate dehydrogenase 2 (502 aa).

Serine 2 bears the N-acetylserine mark. Residues 166 to 225 (MKSCENKDYYVPWDIDLDKIEAVLEDKQKGFVVLEKEGETVNVVTKDDVERVKGYPKLGS) form the CBS domain. NAD(+) contacts are provided by residues 264-266 (DSS) and 314-316 (GMG). Glycine 316 and glycine 318 together coordinate K(+). Serine 319 is an IMP binding site. A K(+)-binding site is contributed by cysteine 321. Cysteine 321 serves as the catalytic Thioimidate intermediate. Residues 354–356 (DGG), 377–378 (GS), and 401–405 (YRGMG) each bind IMP. Arginine 417 functions as the Proton acceptor in the catalytic mechanism. Residue glutamine 429 coordinates IMP. Residues glutamate 488, glycine 489, and glycine 490 each coordinate K(+).

It belongs to the IMPDH/GMPR family. In terms of assembly, homotetramer. K(+) is required as a cofactor.

It localises to the cytoplasm. It carries out the reaction IMP + NAD(+) + H2O = XMP + NADH + H(+). It functions in the pathway purine metabolism; XMP biosynthesis via de novo pathway; XMP from IMP: step 1/1. Its activity is regulated as follows. Mycophenolic acid (MPA) is a non-competitive inhibitor that prevents formation of the closed enzyme conformation by binding to the same site as the amobile flap. In contrast, mizoribine monophosphate (MZP) is a competitive inhibitor that induces the closed conformation. MPA is a potent inhibitor of mammalian IMPDHs but a poor inhibitor of the bacterial enzymes. MZP is a more potent inhibitor of bacterial IMPDH. Functionally, catalyzes the conversion of inosine 5'-phosphate (IMP) to xanthosine 5'-phosphate (XMP), the first committed and rate-limiting step in the de novo synthesis of guanine nucleotides, and therefore plays an important role in the regulation of cell growth. This is Inosine-5'-monophosphate dehydrogenase 2 from Arabidopsis thaliana (Mouse-ear cress).